The chain runs to 737 residues: Autophagy-related protein 22 (737 aa).

The tract at residues 115–154 is disordered; it reads RMSPANAGDNSDSYPYGDDTDGDSSSGLPPPRYPGDDTRP. A compositionally biased stretch (low complexity) spans 125-141; sequence SDSYPYGDDTDGDSSSG. The next 4 helical transmembrane spans lie at 166 to 186, 232 to 252, 264 to 284, and 289 to 309; these read YAFA…PILL, SFAM…VVSI, KLLL…IFIS, and LIGA…FVLL. The interval 327–353 is disordered; sequence GDYGSPGYATTEEGDDEDDEYQEDSTR. Acidic residues predominate over residues 338-349; the sequence is EEGDDEDDEYQE. N354 carries an N-linked (GlcNAc...) asparagine glycan. Residues 395–415 form a helical membrane-spanning segment; sequence GIGIGYIAGLFLQCVAIAILI. Residue N419 is glycosylated (N-linked (GlcNAc...) asparagine). 7 helical membrane passes run 426–446, 487–507, 524–544, 559–579, 593–613, 632–652, and 661–681; these read IVLC…AMWL, LVDI…IATT, WALG…AFSW, ILAC…GYLP, WEMY…SGYC, LYAI…GAII, and AFWF…FINV.

The protein belongs to the ATG22 family.

Its subcellular location is the vacuole membrane. In terms of biological role, vacuolar effluxer which mediate the efflux of amino acids resulting from autophagic degradation. The release of autophagic amino acids allows the maintenance of protein synthesis and viability during nitrogen starvation. The chain is Autophagy-related protein 22 (apg-11) from Neurospora crassa (strain ATCC 24698 / 74-OR23-1A / CBS 708.71 / DSM 1257 / FGSC 987).